Consider the following 731-residue polypeptide: Catalase-peroxidase (731 aa).

Positions 1 to 23 (MSDLKCPFSGHTGAVTPAGNTNN) are disordered. Residues 95–218 (WHSAGTYRTG…LAAVEMGLIY (124 aa)) constitute a cross-link (tryptophyl-tyrosyl-methioninium (Trp-Tyr) (with M-244)). The active-site Proton acceptor is histidine 96. A cross-link (tryptophyl-tyrosyl-methioninium (Tyr-Met) (with W-95)) is located at residues 218-244 (YVNPEGPHGEPDPVASGRDVRETFARM). Histidine 259 is a binding site for heme b.

Belongs to the peroxidase family. Peroxidase/catalase subfamily. Homodimer or homotetramer. It depends on heme b as a cofactor. In terms of processing, formation of the three residue Trp-Tyr-Met cross-link is important for the catalase, but not the peroxidase activity of the enzyme.

It carries out the reaction H2O2 + AH2 = A + 2 H2O. The catalysed reaction is 2 H2O2 = O2 + 2 H2O. In terms of biological role, bifunctional enzyme with both catalase and broad-spectrum peroxidase activity. The protein is Catalase-peroxidase of Synechococcus sp. (strain WH7803).